The following is a 426-amino-acid chain: Docking protein 3 (426 aa).

A PH domain is found at 4-115; that stretch reads PVKDGIIYVQ…WIEQLCQLAF (112 aa). The IRS-type PTB domain maps to 145–249; the sequence is DLTEFPVLVL…ACQQQGQESP (105 aa). Residues 243–282 are disordered; sequence QQGQESPQPSAQGLSNQPWGAEAEDPQCSPTLGRAHSGSH. The segment covering 247–260 has biased composition (polar residues); that stretch reads ESPQPSAQGLSNQP. Tyr331 carries the post-translational modification Phosphotyrosine. The interval 357 to 426 is disordered; the sequence is GCRQAPEGHS…RDGPGARDWS (70 aa). The span at 402–411 shows a compositional bias: basic residues; that stretch reads KPQRTLRAKL.

The protein belongs to the DOK family. Type A subfamily. As to quaternary structure, homooligomer. Interacts with GRB2 and INPP5D/SHIP. In terms of processing, tyrosine-phosphorylated in the presence of GRB2.

The protein localises to the cytoplasm. It is found in the cell membrane. In terms of biological role, DOK proteins are enzymatically inert adaptor or scaffolding proteins. They provide a docking platform for the assembly of multimolecular signaling complexes. Plays a role as negative regulator of the mobilization of calcium ions and of calcium signaling. In Gallus gallus (Chicken), this protein is Docking protein 3 (DOK3).